Consider the following 688-residue polypeptide: DNA ligase (688 aa).

NAD(+)-binding positions include 42–46 (DAEYD), 91–92 (SL), and Glu128. Residue Lys130 is the N6-AMP-lysine intermediate of the active site. NAD(+) contacts are provided by Arg151, Glu188, Lys305, and Lys329. Residues Cys423, Cys426, Cys441, and Cys447 each coordinate Zn(2+). The BRCT domain maps to 608–688 (APQGVLAGKT…GMRKLLEGQL (81 aa)).

It belongs to the NAD-dependent DNA ligase family. LigA subfamily. Mg(2+) is required as a cofactor. It depends on Mn(2+) as a cofactor.

It carries out the reaction NAD(+) + (deoxyribonucleotide)n-3'-hydroxyl + 5'-phospho-(deoxyribonucleotide)m = (deoxyribonucleotide)n+m + AMP + beta-nicotinamide D-nucleotide.. In terms of biological role, DNA ligase that catalyzes the formation of phosphodiester linkages between 5'-phosphoryl and 3'-hydroxyl groups in double-stranded DNA using NAD as a coenzyme and as the energy source for the reaction. It is essential for DNA replication and repair of damaged DNA. In Paraburkholderia xenovorans (strain LB400), this protein is DNA ligase.